We begin with the raw amino-acid sequence, 64 residues long: Large ribosomal subunit protein bL35 (64 aa).

A disordered region spans residues 1–55 (MPKMKSNKSVAARFKLTGSGQLKRTRPGKRHKLSKRSSQQKRNLSKQPLVDQGQV). Residues 23–39 (KRTRPGKRHKLSKRSSQ) are compositionally biased toward basic residues.

It belongs to the bacterial ribosomal protein bL35 family.

This chain is Large ribosomal subunit protein bL35, found in Chlamydia muridarum (strain MoPn / Nigg).